Reading from the N-terminus, the 221-residue chain is uncharacterized protein (221 aa).

An MOSC domain is found at 33–167; sequence RPAKSAVMLY…VSPGANLELL (135 aa).

This is an uncharacterized protein from Bacillus subtilis (strain 168).